Consider the following 154-residue polypeptide: 17 kDa surface antigen (154 aa).

An N-terminal signal peptide occupies residues 1 to 19 (MKLLSKIMIIALAASTLQA). Cys-20 carries N-palmitoyl cysteine lipidation. Cys-20 carries the S-diacylglycerol cysteine lipid modification.

Belongs to the rickettsiale 17 kDa surface antigen family.

It localises to the cell outer membrane. The protein is 17 kDa surface antigen (omp) of Rickettsia amblyommatis (Rickettsia amblyommii).